The sequence spans 82 residues: MVTIRLSRGGAKKRPFYQIVVADSRCPRDGRFIERVGFFNPLAAGNAERLRIQLDRVNAWLEKGASLSDRVAALVKEAQKAA.

It belongs to the bacterial ribosomal protein bS16 family.

This Mannheimia succiniciproducens (strain KCTC 0769BP / MBEL55E) protein is Small ribosomal subunit protein bS16.